The following is an 88-amino-acid chain: MEKKEFHIVAETGIHARPATLLVQTASKFNSDINLEYKGKSVNLKSIMGVMSLGVGQGSDVTITVDGADEAEGMAAIVETLQKEGLAE.

Residues Met-1 to Glu-88 enclose the HPr domain. His-15 (pros-phosphohistidine intermediate) is an active-site residue. Position 46 is a phosphoserine; by HPrK/P (Ser-46).

The protein belongs to the HPr family. Monomer.

It localises to the cytoplasm. Its activity is regulated as follows. Phosphorylation on Ser-46 inhibits the phosphoryl transfer from enzyme I to HPr. Its function is as follows. General (non sugar-specific) component of the phosphoenolpyruvate-dependent sugar phosphotransferase system (sugar PTS). This major carbohydrate active-transport system catalyzes the phosphorylation of incoming sugar substrates concomitantly with their translocation across the cell membrane. The phosphoryl group from phosphoenolpyruvate (PEP) is transferred to the phosphoryl carrier protein HPr by enzyme I. Phospho-HPr then transfers it to the PTS EIIA domain. Functionally, P-Ser-HPr interacts with the catabolite control protein A (CcpA), forming a complex that binds to DNA at the catabolite response elements cre, operator sites preceding a large number of catabolite-regulated genes. Thus, P-Ser-HPr is a corepressor in carbon catabolite repression (CCR), a mechanism that allows bacteria to coordinate and optimize the utilization of available carbon sources. P-Ser-HPr also plays a role in inducer exclusion, in which it probably interacts with several non-PTS permeases and inhibits their transport activity. The protein is Phosphocarrier protein HPr (ptsH) of Enterococcus faecalis (strain ATCC 700802 / V583).